Here is a 439-residue protein sequence, read N- to C-terminus: Xylose isomerase (439 aa).

Residues H101 and D104 contribute to the active site. E232, E268, H271, D296, D307, D309, and D339 together coordinate Mg(2+).

It belongs to the xylose isomerase family. In terms of assembly, homotetramer. Mg(2+) serves as cofactor.

It is found in the cytoplasm. It catalyses the reaction alpha-D-xylose = alpha-D-xylulofuranose. The sequence is that of Xylose isomerase from Actinobacillus pleuropneumoniae serotype 5b (strain L20).